The sequence spans 1766 residues: DNA-directed RNA polymerase II subunit RPB1-B (1766 aa).

Zn(2+) contacts are provided by Cys69, Cys72, Cys79, and His82. Mg(2+)-binding residues include Asp487, Asp489, and Asp491. The segment at 813–825 (PHEFFFHTMAGRE) is bridging helix. A disordered region spans residues 1660–1766 (HAMSSAAPPS…EFGDEEEEEQ (107 aa)). Residues 1706–1716 (RGDEPSTHRSD) show a composition bias toward basic and acidic residues. The span at 1742–1756 (PTAKTPQQAAPPTAA) shows a compositional bias: low complexity.

The protein belongs to the RNA polymerase beta' chain family. As to quaternary structure, component of the RNA polymerase II (Pol II) complex consisting of 12 subunits.

It is found in the nucleus. It catalyses the reaction RNA(n) + a ribonucleoside 5'-triphosphate = RNA(n+1) + diphosphate. In terms of biological role, DNA-dependent RNA polymerase catalyzes the transcription of DNA into RNA using the four ribonucleoside triphosphates as substrates. Largest and catalytic component of RNA polymerase II which synthesizes mRNA precursors and many functional non-coding RNAs. Forms the polymerase active center together with the second largest subunit. Pol II is the central component of the basal RNA polymerase II transcription machinery. It is composed of mobile elements that move relative to each other. RPB1 is part of the core element with the central large cleft, the clamp element that moves to open and close the cleft and the jaws that are thought to grab the incoming DNA template. At the start of transcription, a single-stranded DNA template strand of the promoter is positioned within the central active site cleft of Pol II. A bridging helix emanates from RPB1 and crosses the cleft near the catalytic site and is thought to promote translocation of Pol II by acting as a ratchet that moves the RNA-DNA hybrid through the active site by switching from straight to bent conformations at each step of nucleotide addition. During transcription elongation, Pol II moves on the template as the transcript elongates. In Trypanosoma brucei brucei, this protein is DNA-directed RNA polymerase II subunit RPB1-B (TRP5.9).